A 126-amino-acid chain; its full sequence is Small ribosomal subunit protein uS13 (126 aa).

Residues 96–126 (LPVRGQQTKTNARTRKGRRKGTVANKKKVSK) form a disordered region. A compositionally biased stretch (basic residues) spans 107-126 (ARTRKGRRKGTVANKKKVSK).

It belongs to the universal ribosomal protein uS13 family. As to quaternary structure, part of the 30S ribosomal subunit. Forms a loose heterodimer with protein S19. Forms two bridges to the 50S subunit in the 70S ribosome.

Functionally, located at the top of the head of the 30S subunit, it contacts several helices of the 16S rRNA. In the 70S ribosome it contacts the 23S rRNA (bridge B1a) and protein L5 of the 50S subunit (bridge B1b), connecting the 2 subunits; these bridges are implicated in subunit movement. Contacts the tRNAs in the A and P-sites. This chain is Small ribosomal subunit protein uS13, found in Hydrogenobaculum sp. (strain Y04AAS1).